The following is a 424-amino-acid chain: MTSNSKGVEILSIGTELLLGNIVNTNAKWISEQLSQLGLNHFRQSTVGDNCDRIIKVIQEISQRSNLLITTGGLGPTPDDLTTEAIAKSFNVSLFEKEYLWDEIKQKLSNSKLQDNYSSLRKQCFFPKNAQIINNPRGTAPGMIWEPIKGFTILTFPGVPSEMKTMWEETALDFIKNKFSDSYSFFSNTLKFSGIGESTVAEKINDLLNLKNPTVAPYANLGEVKLRITARAKSEVEANNLINPVKEKLKKEFSNFIFGENHDTLPGVLIKELAKRNETIVFAESCTGGLLSSSITSISGSSQVFLGSIVTYSNDLKNSLLNISEEKLKKYGAVSEKVCQAMATNVKEKLEADWAIAISGIAGPNGGCKEKPVGLVHISISGPNNHITNIKKTFNSTRNRIEIQTLSVNVCLNSLRLILLSKRK.

This sequence belongs to the CinA family.

This Prochlorococcus marinus (strain MIT 9312) protein is CinA-like protein.